Here is a 220-residue protein sequence, read N- to C-terminus: Large ribosomal subunit protein uL16z (220 aa).

It belongs to the universal ribosomal protein uL16 family. As to quaternary structure, component of the small ribosomal subunit. Mature ribosomes consist of a small (40S) and a large (60S) subunit. The 40S subunit contains about 33 different proteins and 1 molecule of RNA (18S). The 60S subunit contains about 49 different proteins and 3 molecules of RNA (25S, 5.8S and 5S). Interacts with NIK1. Interacts with LIMYB. In terms of processing, phosphorylated by NIK1 and NIK2 in vitro. As to expression, ubiquitous, with the highest expression in flowers. Expressed in seedlings, leaves, roots, stems and flowers. Expressed in young leaves, mostly in dividing cells and in the hydathodes, in the root tips and lateral root primordia, in pistils, anthers, and pollen grains, and in developing seeds.

The protein resides in the cytoplasm. Its subcellular location is the nucleus. Its function is as follows. Ribosomal protein involved in translational regulation. Contribute to general translation under UV-B stress. Involved in the NIK1-mediated defense response to geminivirus infection. Acts coordinately with LIMYB as a transcriptional repressor. This is Large ribosomal subunit protein uL16z from Arabidopsis thaliana (Mouse-ear cress).